Here is a 217-residue protein sequence, read N- to C-terminus: Probable GTP-binding protein EngB (217 aa).

The EngB-type G domain occupies 27 to 201 (EGIEVAFAGR…REKLDTWFSE (175 aa)). GTP contacts are provided by residues 35-42 (GRSNAGKS), 62-66 (GRTQL), 80-83 (DLPG), 147-150 (TKAD), and 180-182 (FSS). Mg(2+) contacts are provided by S42 and T64.

This sequence belongs to the TRAFAC class TrmE-Era-EngA-EngB-Septin-like GTPase superfamily. EngB GTPase family. It depends on Mg(2+) as a cofactor.

Functionally, necessary for normal cell division and for the maintenance of normal septation. The chain is Probable GTP-binding protein EngB from Yersinia enterocolitica serotype O:8 / biotype 1B (strain NCTC 13174 / 8081).